A 195-amino-acid chain; its full sequence is Probable septum site-determining protein MinC (195 aa).

This sequence belongs to the MinC family. Interacts with MinD and FtsZ.

Cell division inhibitor that blocks the formation of polar Z ring septums. Rapidly oscillates between the poles of the cell to destabilize FtsZ filaments that have formed before they mature into polar Z rings. Prevents FtsZ polymerization. The polypeptide is Probable septum site-determining protein MinC (Helicobacter pylori (strain G27)).